The following is a 115-amino-acid chain: MEGQAVTTNPWLIMAINMTVVFAVLIALGILMEIVHLIDPTKKKKEAPAATAPVATPTATPVAPANASAQNEDEVVAAIVGAIVAMGYSSEQIASIRPTATSAKWRLEGRLSGRG.

The chain crosses the membrane as a helical span at residues 11-31 (WLIMAINMTVVFAVLIALGIL). A disordered region spans residues 46 to 70 (EAPAATAPVATPTATPVAPANASAQ). Over residues 48 to 65 (PAATAPVATPTATPVAPA) the composition is skewed to low complexity.

The protein belongs to the OadG family. The methylmalonyl-CoA decarboxylase is composed of five subunits: the carboxyltransferase alpha subunit (MmdA), the tunnel beta subunit (MmdB), the biotin-containing gamma subunit (MmdC), and the delta (MmdD) and epsilon (MmdE) subunits. In terms of processing, the N-terminus is blocked.

It localises to the cell membrane. The enzyme catalyses (S)-methylmalonyl-CoA + Na(+)(in) + H(+)(out) = propanoyl-CoA + Na(+)(out) + CO2. Completely inhibited by avidin. Its function is as follows. Subunit of the sodium ion pump methylmalonyl-CoA decarboxylase, which converts the chemical energy of a decarboxylation reaction into an electrochemical gradient of Na(+) ions across the cytoplasmic membrane, thereby creating a sodium ion motive force that is used for ATP synthesis. The delta subunit is required for catalytic activity as well as for the proper assembly of the individual subunits to an enzyme complex. Can also convert malonyl-CoA into acetyl-CoA. In Veillonella parvula (Staphylococcus parvulus), this protein is Methylmalonyl-CoA decarboxylase subunit delta.